Here is a 201-residue protein sequence, read N- to C-terminus: Dephospho-CoA kinase (201 aa).

Residues 3 to 201 (WIGLTGGIAC…KWLEELKNQN (199 aa)) form the DPCK domain. 11–16 (ACGKST) contributes to the ATP binding site.

This sequence belongs to the CoaE family.

It localises to the cytoplasm. The enzyme catalyses 3'-dephospho-CoA + ATP = ADP + CoA + H(+). It participates in cofactor biosynthesis; coenzyme A biosynthesis; CoA from (R)-pantothenate: step 5/5. Functionally, catalyzes the phosphorylation of the 3'-hydroxyl group of dephosphocoenzyme A to form coenzyme A. This chain is Dephospho-CoA kinase, found in Bdellovibrio bacteriovorus (strain ATCC 15356 / DSM 50701 / NCIMB 9529 / HD100).